A 59-amino-acid chain; its full sequence is Large ribosomal subunit protein uL30 (59 aa).

It belongs to the universal ribosomal protein uL30 family. Part of the 50S ribosomal subunit.

The polypeptide is Large ribosomal subunit protein uL30 (Solibacter usitatus (strain Ellin6076)).